The primary structure comprises 1522 residues: Paired amphipathic helix protein pst1 (1522 aa).

Residues 139 to 174 (TILSSTDSNIPRPGTVKSSASPFVPNQNPSAPPPPP) are disordered. The PAH 1 domain maps to 178 to 248 (RQLNVTDALS…QGFNTFLPPG (71 aa)). Residues 307 to 339 (QSSASHPVLQPPAPSTLQFNPSPSPAAPSYPPV) form a disordered region. Over residues 328-337 (SPSPAAPSYP) the composition is skewed to pro residues. A PAH 2 domain is found at 345-415 (QAADLDQAIN…EEFKRFLPDV (71 aa)). Disordered regions lie at residues 422 to 504 (ETQD…AFNV), 928 to 968 (AREN…DESS), and 1343 to 1522 (SGKA…KDDL). Positions 426 to 441 (KSTVVPQESATATPKR) are enriched in polar residues. Ser442 bears the Phosphoserine mark. Over residues 442–468 (SPSATPTSALPPIGKFAPPTTAKAQPA) the composition is skewed to low complexity. Thr446 carries the phosphothreonine modification. The 73-residue stretch at 504–576 (VPIAQNKNPS…NWLKDLVKYN (73 aa)) folds into the PAH 3 domain. Over residues 928 to 960 (ARENRSSVKEDYVSESTERTPDASEIDEHISEH) the composition is skewed to basic and acidic residues. A compositionally biased stretch (polar residues) spans 1385-1398 (GKSSVTRGNKTNLK). A compositionally biased stretch (basic and acidic residues) spans 1403–1432 (RNNDDSSNKINLSEKEKEKESIEDEEKNRE). Ser1443 is modified (phosphoserine). A compositionally biased stretch (basic and acidic residues) spans 1461 to 1474 (TSSHRPERSSEKKS). Residues 1478-1487 (VFTSVKQTAE) show a composition bias toward polar residues. Residues 1488–1522 (NDADNEDDKTDMDDQTEETLDADNTMEEEPSKDDL) are compositionally biased toward acidic residues.

It localises to the nucleus. Has a role in modulating the nuclear import of TF1 virus-like particles. Essential for viability. This chain is Paired amphipathic helix protein pst1 (pst1), found in Schizosaccharomyces pombe (strain 972 / ATCC 24843) (Fission yeast).